The sequence spans 264 residues: Probable transcriptional regulatory protein PPA1157 (264 aa).

Belongs to the TACO1 family.

It localises to the cytoplasm. This chain is Probable transcriptional regulatory protein PPA1157, found in Cutibacterium acnes (strain DSM 16379 / KPA171202) (Propionibacterium acnes).